The primary structure comprises 297 residues: Palmitoyl-protein thioesterase ABHD10, mitochondrial (297 aa).

A mitochondrion-targeting transit peptide spans 1-43 (MAAWVPCRKWGWAAVSFGRHRGLIASLARKPPWAWWLSACRQK). The region spanning 69-181 (IIFIPGYLSN…GVVTQFHSLP (113 aa)) is the AB hydrolase-1 domain. Catalysis depends on charge relay system residues Ser143, Asp240, and His270.

The protein belongs to the AB hydrolase superfamily. As to expression, expressed in epididymal sperm but not in testicular sperm (at protein level).

It localises to the mitochondrion. It catalyses the reaction S-hexadecanoyl-L-cysteinyl-[protein] + H2O = L-cysteinyl-[protein] + hexadecanoate + H(+). The catalysed reaction is mycophenolic acid O-acyl-beta-D-glucuronide + H2O = mycophenolate + D-glucuronate + H(+). With respect to regulation, inhibited by palmostatin-B. Functionally, acts as an acyl-protein thioesterase that hydrolyzes fatty acids from acylated residues in proteins. Regulates the mitochondrial S-depalmitoylation of the nucleophilic active site residue of peroxiredoxin-5/PRDX5, a key antioxidant protein, therefore modulating mitochondrial antioxidant ability. Also catalyzes the deglucuronidation of mycophenolic acid acyl-glucuronide, an active metabolite of the immunosuppressant drug mycophenolate. In Rattus norvegicus (Rat), this protein is Palmitoyl-protein thioesterase ABHD10, mitochondrial.